A 217-amino-acid polypeptide reads, in one-letter code: Insulin-like growth factor 2.S (217 aa).

Residues 1 to 56 (MEQLSCKHRSSSVEAEAQLCRQTESRSTQLPRMSVMRHLFLLSITFLVYTLDSAKA) form the signal peptide. Residues 57–83 (YRATETLCGGELVDTLQFVCGDRGFYF) are b. 3 cysteine pairs are disulfide-bonded: C64–C103, C76–C116, and C102–C107. Residues 84 to 96 (STNNGRSNRRPNR) are c. The tract at residues 97 to 117 (GIVDVCCFKSCDLELLETYCA) is a. The interval 118 to 123 (KPTKNE) is d. A propeptide spans 124–217 (RDVSTAPATA…LQQASEPSHN (94 aa)) (e peptide).

Belongs to the insulin family.

The protein resides in the secreted. Its function is as follows. The insulin-like growth factors, isolated from plasma, are structurally and functionally related to insulin but have a much higher growth-promoting activity. Promotes anterior neural development. Acts as a ligand for integrin which is required for IGF2 signaling. This is Insulin-like growth factor 2.S from Xenopus laevis (African clawed frog).